Consider the following 332-residue polypeptide: MSVREDRNVYDVTVIGGGPTGMFAAFYGGLRQMNVKIIESLPQLGGQLAALYPEKYIYDIAGFPKVRAQELVDQLKEQLSRFSPTICLNQSVEMLEKQEDGTFKLTTDKEIHYSKTVIITAGNGAFQPRRLEIDSASQYEGKNLHYFISDLQQFAGKRVLVCGGGDSAVDWSLMLEPIAASVTIVHRRDKFRAHEHSVEQLMNSRVQVKTPYVPAELIGDEQGIRQVVLEHVKEGAKETIDVDAVIVNYGFISSLGPIKNWGLDIEKNSIKVNSRMETNIPGVYAAGDICTYDGKIKLIACGFGEAPIAISSAKTYIDPTARMQPAHSSSLF.

8 residues coordinate FAD: threonine 20, glutamate 39, glutamine 47, tyrosine 52, valine 92, phenylalanine 126, aspartate 288, and serine 329.

Belongs to the ferredoxin--NADP reductase type 2 family. In terms of assembly, homodimer. FAD is required as a cofactor.

The enzyme catalyses 2 reduced [2Fe-2S]-[ferredoxin] + NADP(+) + H(+) = 2 oxidized [2Fe-2S]-[ferredoxin] + NADPH. This chain is Ferredoxin--NADP reductase, found in Geobacillus thermodenitrificans (strain NG80-2).